A 316-amino-acid polypeptide reads, in one-letter code: Conjugated bile acid hydrolase (316 aa).

Residue cysteine 2 is the Nucleophile of the active site. 2 residues coordinate deoxycholate: cysteine 2 and arginine 18. Position 81 (asparagine 81) interacts with taurine.

It belongs to the peptidase C59 family.

The enzyme catalyses cholate + taurine = taurocholate + H2O. It catalyses the reaction taurodeoxycholate + H2O = deoxycholate + taurine. It carries out the reaction taurochenodeoxycholate + H2O = chenodeoxycholate + taurine. The catalysed reaction is glycocholate + H2O = cholate + glycine. The protein operates within lipid metabolism; bile acid biosynthesis. With respect to regulation, glycocholate hydrolysis is inhibited by various previously identified BSH inhibitors, including KIO(3), NaHIO(3), NaIO(4), CuCl(2), menadione, riboflavin, gossypetin, and the antibiotics oxytetracycline, demeclocycline hydrochloride and methacycline hydrochloride. Functionally, bile salt hydrolase that catalyzes the deconjugation of glycine- and taurine-linked bile salts, which occurs naturally in the intestines of animals, releasing amino acid residues and deconjugated bile salts (bile acids). Can hydrolyze the amide bond in the bile salts taurocholate (TCA), taurodeoxycholate (TDCA), taurochenodeoxycholate (TCDCA), taurohyodeoxycholate (THDCA) and tauroursodeoxycholate (TUDCA). Oh et al. did not detect activity with the glycine-conjugated bile salts glycocholate (GCA), glycodeoxycholate (GDCA) and glycochenodeoxycholate (GCDCA). However, a later study shows activity toward glycocholate (GCA). This chain is Conjugated bile acid hydrolase, found in Lactobacillus acidophilus.